Here is a 278-residue protein sequence, read N- to C-terminus: Embryonic polyadenylate-binding protein 2 (278 aa).

Disordered stretches follow at residues 21-66 (VSSD…GDAG) and 101-128 (EGTPRPPGVQQQAEEEEGTAAGQLLSPE). Residues 35–50 (ETKEILGPEGGEGKEE) are compositionally biased toward basic and acidic residues. Residues 51–63 (KEEEEDAEEDQDG) show a composition bias toward acidic residues. Residues 147 to 224 (RSVYVGNVDY…RVIKVLPKRT (78 aa)) enclose the RRM domain. The segment at 227 to 278 (PGISSTDRGGLRGHPGSRGAPFPHSGLQGRPRLRPQGQNRARGKFSPWFSPY) is disordered.

Expressed in various adult tissues.

It is found in the cytoplasm. In terms of biological role, binds the poly(A) tail of mRNA. The protein is Embryonic polyadenylate-binding protein 2 (PABPN1L) of Homo sapiens (Human).